The chain runs to 411 residues: Heparan-sulfate 6-O-sulfotransferase 1 (411 aa).

The Cytoplasmic portion of the chain corresponds to 1 to 19 (MRRRRAGGRTMVERASKFV). Residues 20-37 (LVVAGSACFMLILYQYAG) form a helical; Signal-anchor for type II membrane protein membrane-spanning segment. Topologically, residues 38–411 (PGLSLGAPGG…DYMSHIIEKW (374 aa)) are lumenal. 93–101 (HIQKTGGTT) contacts 3'-phosphoadenylyl sulfate. Substrate is bound by residues 123 to 124 (KK), arginine 140, tryptophan 145, and histidine 150. Catalysis depends on histidine 150, which acts as the Proton acceptor. Residues arginine 185 and serine 193 each coordinate 3'-phosphoadenylyl sulfate. Positions 197 and 204 each coordinate substrate. Asparagine 264 carries an N-linked (GlcNAc...) asparagine glycan. A 3'-phosphoadenylyl sulfate-binding site is contributed by 317–319 (MQY). Asparagine 320 is a glycosylation site (N-linked (GlcNAc...) asparagine). 323-324 (RA) is a 3'-phosphoadenylyl sulfate binding site. A coiled-coil region spans residues 352 to 386 (KDLFQQRYQYKRQLERREQRLRNREERLLHRSKEA). Residues 380-401 (LHRSKEALPREDPEEPGRVPTE) are disordered.

Belongs to the sulfotransferase 6 family. N-glycosylated. In terms of tissue distribution, expressed in fetal brain and liver.

It localises to the membrane. It catalyses the reaction alpha-D-glucosaminyl-[heparan sulfate](n) + 3'-phosphoadenylyl sulfate = 6-sulfo-alpha-D-glucosaminyl-[heparan sulfate](n) + adenosine 3',5'-bisphosphate + H(+). 6-O-sulfation enzyme which catalyzes the transfer of sulfate from 3'-phosphoadenosine 5'-phosphosulfate (PAPS) to position 6 of the N-sulfoglucosamine residue (GlcNS) of heparan sulfate. Critical for normal neuronal development where it may play a role in neuron branching. May also play a role in limb development. May prefer iduronic acid. The sequence is that of Heparan-sulfate 6-O-sulfotransferase 1 from Mus musculus (Mouse).